Reading from the N-terminus, the 209-residue chain is Outer-membrane lipoprotein carrier protein (209 aa).

The N-terminal stretch at 1-23 is a signal peptide; it reads MKNLLKKSLLGLAFLSLNGFAFA.

The protein belongs to the LolA family. In terms of assembly, monomer.

It localises to the periplasm. Functionally, participates in the translocation of lipoproteins from the inner membrane to the outer membrane. Only forms a complex with a lipoprotein if the residue after the N-terminal Cys is not an aspartate (The Asp acts as a targeting signal to indicate that the lipoprotein should stay in the inner membrane). The chain is Outer-membrane lipoprotein carrier protein from Glaesserella parasuis serovar 5 (strain SH0165) (Haemophilus parasuis).